The primary structure comprises 413 residues: NAD-dependent dihydropyrimidine dehydrogenase subunit PreT homolog (413 aa).

Residue E287 coordinates NAD(+).

Belongs to the NADH dehydrogenase family. Heterotetramer of 2 PreA and 2 PreT subunits.

The catalysed reaction is 5,6-dihydrouracil + NAD(+) = uracil + NADH + H(+). It catalyses the reaction 5,6-dihydrothymine + NAD(+) = thymine + NADH + H(+). Its function is as follows. Involved in pyrimidine base degradation. Catalyzes physiologically the reduction of uracil to 5,6-dihydrouracil (DHU) by using NADH as a specific cosubstrate. It also catalyzes the reverse reaction and the reduction of thymine to 5,6-dihydrothymine (DHT). The sequence is that of NAD-dependent dihydropyrimidine dehydrogenase subunit PreT homolog (preT) from Salmonella typhi.